Reading from the N-terminus, the 545-residue chain is Glucose-6-phosphate isomerase (545 aa).

The active-site Proton donor is glutamate 351. Active-site residues include histidine 382 and lysine 510.

It belongs to the GPI family.

It localises to the cytoplasm. It catalyses the reaction alpha-D-glucose 6-phosphate = beta-D-fructose 6-phosphate. It functions in the pathway carbohydrate biosynthesis; gluconeogenesis. The protein operates within carbohydrate degradation; glycolysis; D-glyceraldehyde 3-phosphate and glycerone phosphate from D-glucose: step 2/4. In terms of biological role, catalyzes the reversible isomerization of glucose-6-phosphate to fructose-6-phosphate. This is Glucose-6-phosphate isomerase from Helicobacter pylori (strain Shi470).